The primary structure comprises 304 residues: Protoheme IX farnesyltransferase (304 aa).

The next 7 helical transmembrane spans lie at 24–44, 45–65, 107–127, 145–165, 172–192, 234–254, and 277–297; these read VMTL…GTIH, PVIA…AAAL, VFVM…FSIF, IVIG…AVTG, VLLF…LALF, WIGG…LVFV, and LFGY…GDRL.

It belongs to the UbiA prenyltransferase family. Protoheme IX farnesyltransferase subfamily.

The protein resides in the cell inner membrane. The enzyme catalyses heme b + (2E,6E)-farnesyl diphosphate + H2O = Fe(II)-heme o + diphosphate. It participates in porphyrin-containing compound metabolism; heme O biosynthesis; heme O from protoheme: step 1/1. In terms of biological role, converts heme B (protoheme IX) to heme O by substitution of the vinyl group on carbon 2 of heme B porphyrin ring with a hydroxyethyl farnesyl side group. The protein is Protoheme IX farnesyltransferase of Novosphingobium aromaticivorans (strain ATCC 700278 / DSM 12444 / CCUG 56034 / CIP 105152 / NBRC 16084 / F199).